We begin with the raw amino-acid sequence, 628 residues long: DNA ligase (628 aa).

NAD(+)-binding positions include 36-40 (DVEYD), 85-86 (SL), and glutamate 117. The active-site N6-AMP-lysine intermediate is lysine 119. The NAD(+) site is built by arginine 140, glutamate 174, lysine 309, and lysine 333. Zn(2+) is bound by residues cysteine 427, cysteine 430, cysteine 446, and cysteine 452.

It belongs to the NAD-dependent DNA ligase family. LigA subfamily. The cofactor is Mg(2+). It depends on Mn(2+) as a cofactor.

The catalysed reaction is NAD(+) + (deoxyribonucleotide)n-3'-hydroxyl + 5'-phospho-(deoxyribonucleotide)m = (deoxyribonucleotide)n+m + AMP + beta-nicotinamide D-nucleotide.. In terms of biological role, DNA ligase that catalyzes the formation of phosphodiester linkages between 5'-phosphoryl and 3'-hydroxyl groups in double-stranded DNA using NAD as a coenzyme and as the energy source for the reaction. It is essential for DNA replication and repair of damaged DNA. This is DNA ligase from Tropheryma whipplei (strain Twist) (Whipple's bacillus).